Consider the following 90-residue polypeptide: Small ribosomal subunit protein uS17 (90 aa).

This sequence belongs to the universal ribosomal protein uS17 family. As to quaternary structure, part of the 30S ribosomal subunit.

One of the primary rRNA binding proteins, it binds specifically to the 5'-end of 16S ribosomal RNA. The polypeptide is Small ribosomal subunit protein uS17 (Acidiphilium cryptum (strain JF-5)).